The following is a 141-amino-acid chain: Hemoglobin subunit alpha-2 (141 aa).

A Globin domain is found at 1–141 (VLSEGNKKII…VTYQLSSLYR (141 aa)). Position 59 (histidine 59) interacts with O2. Histidine 88 is a binding site for heme b.

Belongs to the globin family. As to quaternary structure, heterotetramer of two alpha chains and two beta chains. In terms of tissue distribution, red blood cells.

Functionally, involved in oxygen transport from the lung to the various peripheral tissues. This Torpedo marmorata (Marbled electric ray) protein is Hemoglobin subunit alpha-2.